The sequence spans 633 residues: Biosynthetic arginine decarboxylase (633 aa).

Lys-101 bears the N6-(pyridoxal phosphate)lysine mark. Val-284–Tyr-294 provides a ligand contact to substrate.

Belongs to the Orn/Lys/Arg decarboxylase class-II family. SpeA subfamily. The cofactor is Mg(2+). It depends on pyridoxal 5'-phosphate as a cofactor.

The catalysed reaction is L-arginine + H(+) = agmatine + CO2. Its pathway is amine and polyamine biosynthesis; agmatine biosynthesis; agmatine from L-arginine: step 1/1. Functionally, catalyzes the biosynthesis of agmatine from arginine. This chain is Biosynthetic arginine decarboxylase, found in Aeromonas salmonicida (strain A449).